Consider the following 107-residue polypeptide: MISGDTILFALMVVTGVNMIRYLTALRSLIYIMREAHPLLYQQVDGNGFFTTHGNVTKQVRLFHYIKSKEYHHHHDEIFTGKCERVRELFVLSTALLGVTLLAAFIL.

2 consecutive transmembrane segments (helical) span residues 6-26 (TILF…LTAL) and 86-106 (VREL…AAFI).

Belongs to the universal stress protein B family.

The protein localises to the cell inner membrane. In Vibrio parahaemolyticus serotype O3:K6 (strain RIMD 2210633), this protein is Universal stress protein B homolog.